We begin with the raw amino-acid sequence, 762 residues long: cGMP-dependent protein kinase 2 (762 aa).

The disordered stretch occupies residues 1 to 25; it reads MGNGSVKPKHSKHPDGQSGNLSNEA. Residue Gly2 is the site of N-myristoyl glycine attachment. Residues Ser110 and Ser117 each carry the phosphoserine modification. Residues 112–138 form a disordered region; the sequence is LVSLHSRRGAKAGVSAEPTSRTYDLNK. Residues 168-283 are cGMP-binding, high affinity; cAMP-binding, moderate affinity; it reads FLKRLDPQQI…DEEYRNFLRS (116 aa). 3',5'-cyclic GMP contacts are provided by residues 232-235, 242-243, Lys347, 356-359, 366-367, Asp412, and Arg415; these read GELA, RT, GEKA, and RS. The interval 286-416 is cGMP-binding, high affinity; cAMP-binding, low affinity; sequence LLKNLPEDKL…TLNRDDEKRH (131 aa). Ser431 is modified (phosphoserine). Positions 453–711 constitute a Protein kinase domain; sequence LEIIATLGVG…INDIKKHRWL (259 aa). Residues 459–467 and Lys482 each bind ATP; that span reads LGVGGFGRV. The Proton acceptor role is filled by Asp576. Thr609 is modified (phosphothreonine). Residues 712–762 enclose the AGC-kinase C-terminal domain; it reads NGFNWEGLKARSLPSPLRRELSGPIDHSYFDKYPPEKGVPPDEMSGWDKDF. The tract at residues 740 to 762 is disordered; the sequence is YFDKYPPEKGVPPDEMSGWDKDF.

Belongs to the protein kinase superfamily. AGC Ser/Thr protein kinase family. cGMP subfamily. Interacts with GRIA1/GLUR1. Post-translationally, myristoylation mediates membrane localization. In terms of tissue distribution, highly expressed in intestinal mucosa and is 20 times less abundant in brain and kidney. Expressed in jejunum, in the apical domain of the villus epithelium.

The protein resides in the apical cell membrane. The protein localises to the cell membrane. The catalysed reaction is L-seryl-[protein] + ATP = O-phospho-L-seryl-[protein] + ADP + H(+). It carries out the reaction L-threonyl-[protein] + ATP = O-phospho-L-threonyl-[protein] + ADP + H(+). Its activity is regulated as follows. Binding of cGMP results in enzyme activation. Its function is as follows. Crucial regulator of intestinal secretion and bone growth. Phosphorylates and activates CFTR on the plasma membrane. Plays a key role in intestinal secretion by regulating cGMP-dependent translocation of CFTR in jejunum. Acts downstream of NMDAR to activate the plasma membrane accumulation of GRIA1/GLUR1 in synapse and increase synaptic plasticity. Phosphorylates GRIA1/GLUR1 at Ser-863. Acts as regulator of gene expression and activator of the extracellular signal-regulated kinases MAPK3/ERK1 and MAPK1/ERK2 in mechanically stimulated osteoblasts. Under fluid shear stress, mediates ERK activation and subsequent induction of FOS, FOSL1/FRA1, FOSL2/FRA2 and FOSB that play a key role in the osteoblast anabolic response to mechanical stimulation. The polypeptide is cGMP-dependent protein kinase 2 (Prkg2) (Rattus norvegicus (Rat)).